The primary structure comprises 336 residues: Probable assembly chaperone of rpl4 (336 aa).

TPR repeat units follow at residues 39 to 72 (GRAFELLGEVYAELADVKKARSAFKEAVSRSKNL), 75 to 108 (DQGYEKYLWLAQINDNGSKALKLYQKGVTILERL), 110 to 143 (IDKGEDADLKKKIQGAYCSIAELFMTDLCMQPDA), and 162 to 195 (AEALQTLASMRISQQKIEEAKDALSKCLQSISRA). The disordered stretch occupies residues 316–336 (DEENEEAEWETSENEEEMDED).

Belongs to the ACL4 family.

Its subcellular location is the cytoplasm. It localises to the nucleus. It is found in the nucleolus. In terms of biological role, acts as a chaperone for the L4 ribosomal subunit encoded by rpl4A and rpl4B, required for hierarchical ribosome assembly. Shields ribosomal protein L4 until timely release and insertion into the pre-ribosome is possible, once ribosomal protein L18 is present. This chain is Probable assembly chaperone of rpl4, found in Schizosaccharomyces pombe (strain 972 / ATCC 24843) (Fission yeast).